The chain runs to 1032 residues: MRPGDIYPPPQGYNAYGSPTRQNQRPPQPQPYPPQPYPPQQPAVQYGDPFSASSQGPPTAPLHNMSPTPQEPQGSRYNASHPLQPISPSGPQGPRYSLPTQSLSPFNGSPASAPAPAPYTMGSPSHSNARMHASPPQHIRFDTNPSHLPPQQQLTPSYSYPSGLDDRLTSPPPLLPHHSSQSSVSSIPAPVPDNINYNPSYPPQGYGNAADDDMNDSHPLLAHAAPDARFGIPQSTSAMSMSAPAARYQLSDTGAGDMGVSMYTGNGNAEGQNGFGTGDGVGANGEDEVNMHYGPIPARMVRRNRTQKRVQLFQGHLVLDIEVPTMLLDQCPIRQGNEFTKMRYTAVTCDPNDFVEDRYTLRQRLYDPPRQTELFIVITMYNEDDVLFCRTMRGVMQNIAHLCTRSKSKTWGENGWKKVVVCIVADGRKKINPRTRSVLAALGVYQEGVGKNIINGKPVTAHVYEYTTQLSINSSGKIGPGGSNTVPIQMLFCLKEKNQKKINSHRWFFNAFGACLRPNVCVLLDVGTQPGPDSIYHLWKAFDINSSVGGACGEIVALKGMFWKNLLNPLVAAQNFEYKMSNILDKPLESVFGYITVLPGAFSAYRYIALLNDEKGNGPLKQYFVGERMHGSGAGIFSSNMYLAEDRILCWELVSKRECKWKLHYVKSAYAITDVPDTVPELVSQRRRWLNGSFFAAIHSIVHFGYLYRSSHTFTRKFILHVELVYQTLNMVFAWFALGNYYIAFFVLTQSLNSLGSAWKYVNIPLHYIYIALLLWCFLLSLGNRPAGSKIGYTSSMVGFALITIYMLFAAIFLAVKGIEDVQAEGEITASAVFGNKIFRNIVISLLATYGLYIISSLMALEPWHMITSFFQYLLIAPSYINVLNVYAFCNVHDVSWGTKGSDKVSDDLGAVKSSADNKDEVTVDLPIEQKDINAVYAAELQILGNKAPKEVRVVSDDQKQEDYYKNVRTNVLLVWTMTNGALVAVILQASGGDNSLATTYMGVLLYTVAGLAFFRFLGSSTYLVVRLFAGE.

Pro residues-rich tracts occupy residues 1–11 (MRPGDIYPPPQ) and 26–41 (PPQPQPYPPQPYPPQQ). Residues 1–220 (MRPGDIYPPP…DDDMNDSHPL (220 aa)) form a disordered region. Composition is skewed to polar residues over residues 65–78 (MSPTPQEPQGSRYN), 98–107 (LPTQSLSPFN), and 143–160 (TNPSHLPPQQQLTPSYSY). An N-linked (GlcNAc...) asparagine glycan is attached at Asn78. Residues 176-188 (PHHSSQSSVSSIP) are compositionally biased toward low complexity. 5 N-linked (GlcNAc...) asparagine glycosylation sites follow: Asn215, Asn304, Asn473, Asn545, and Asn691. A run of 7 helical transmembrane segments spans residues 728-748 (TLNMVFAWFALGNYYIAFFVL), 762-782 (VNIPLHYIYIALLLWCFLLSL), 796-816 (SMVGFALITIYMLFAAIFLAV), 842-862 (IVISLLATYGLYIISSLMALE), 870-890 (FFQYLLIAPSYINVLNVYAFC), 972-992 (VLLVWTMTNGALVAVILQASG), and 995-1015 (NSLATTYMGVLLYTVAGLAFF).

Belongs to the chitin synthase family.

The protein localises to the cell membrane. The enzyme catalyses [(1-&gt;4)-N-acetyl-beta-D-glucosaminyl](n) + UDP-N-acetyl-alpha-D-glucosamine = [(1-&gt;4)-N-acetyl-beta-D-glucosaminyl](n+1) + UDP + H(+). Its function is as follows. Polymerizes chitin, a structural polymer of the cell wall and septum, by transferring the sugar moiety of UDP-GlcNAc to the non-reducing end of the growing chitin polymer. The polypeptide is Chitin synthase 8 (Cryptococcus neoformans var. grubii serotype A (strain H99 / ATCC 208821 / CBS 10515 / FGSC 9487) (Filobasidiella neoformans var. grubii)).